A 56-amino-acid chain; its full sequence is Per os infectivity factor AC110 (56 aa).

In terms of biological role, plays an essential role in the process of oral infection. May participate in the crossing of occlusion-derived virions through the host peritrophic membrane during oral infection. This Autographa californica nuclear polyhedrosis virus (AcMNPV) protein is Per os infectivity factor AC110.